We begin with the raw amino-acid sequence, 251 residues long: Ribonuclease 3 (251 aa).

The region spanning 3–125 (LATLETRLGH…LFGAVFLDAG (123 aa)) is the RNase III domain. Residue E38 coordinates Mg(2+). The active site involves D42. Mg(2+) is bound by residues D111 and E114. Residue E114 is part of the active site. One can recognise a DRBM domain in the interval 152 to 222 (DAKTLLQEFL…AKLALEAALV (71 aa)).

Belongs to the ribonuclease III family. In terms of assembly, homodimer. The cofactor is Mg(2+).

The protein resides in the cytoplasm. It catalyses the reaction Endonucleolytic cleavage to 5'-phosphomonoester.. Its function is as follows. Digests double-stranded RNA. Involved in the processing of primary rRNA transcript to yield the immediate precursors to the large and small rRNAs (23S and 16S). Processes some mRNAs, and tRNAs when they are encoded in the rRNA operon. Processes pre-crRNA and tracrRNA of type II CRISPR loci if present in the organism. This Bordetella avium (strain 197N) protein is Ribonuclease 3.